We begin with the raw amino-acid sequence, 474 residues long: MTVKTRFAPSPTGYLHVGGARTALYSWLFAKNQGGEFVLRIEDTDLERNSQEAVDAIIEGMHWMGMEWDEGPYYQSKRFDRYNEVVDQLLAEDKAYKCYASKELLDEIRAEQEANKEMARYDANHPKIVAANAAAKEGDACVIRFRNPKEGSVVFDDQIRGRIEISNSQLDDLIIRRTDGAPTYNFVVVVDDWDMGITQVIRGEDHINNTPRQINIYEALGAPVPMFAHCAMILGDDGAKLSKRHGAVSVMQYRDEGYLPNALNNYLVRLGWSHGDQEIFSQEEMINLFSLSAVSKSASAFNTDKLLWLNNHYIKSSEPEYVAKYLQWHLDQKEISLDNGPAITEVIKLVGERCNTLIELAEQSRYFYQDFEEFEAGAAKKHLRGVAKGPLELALAKVEALEEWTTENLHNVIEEVCAELEIGMGKIGMPLRVAVTGGGQSPSVDAVMQLVGKERVVARIKMALAFIAEREANA.

The short motif at 9-19 (PSPTGYLHVGG) is the 'HIGH' region element. Positions 240-244 (KLSKR) match the 'KMSKS' region motif. Lys-243 lines the ATP pocket.

Belongs to the class-I aminoacyl-tRNA synthetase family. Glutamate--tRNA ligase type 1 subfamily. In terms of assembly, monomer.

The protein localises to the cytoplasm. The catalysed reaction is tRNA(Glu) + L-glutamate + ATP = L-glutamyl-tRNA(Glu) + AMP + diphosphate. Functionally, catalyzes the attachment of glutamate to tRNA(Glu) in a two-step reaction: glutamate is first activated by ATP to form Glu-AMP and then transferred to the acceptor end of tRNA(Glu). In Aliivibrio fischeri (strain MJ11) (Vibrio fischeri), this protein is Glutamate--tRNA ligase.